A 431-amino-acid polypeptide reads, in one-letter code: Enolase (431 aa).

Glutamine 168 is a (2R)-2-phosphoglycerate binding site. The Proton donor role is filled by glutamate 210. Residues aspartate 247, glutamate 291, and aspartate 318 each coordinate Mg(2+). Residues lysine 343, arginine 372, serine 373, and lysine 394 each contribute to the (2R)-2-phosphoglycerate site. The Proton acceptor role is filled by lysine 343.

It belongs to the enolase family. As to quaternary structure, component of the RNA degradosome, a multiprotein complex involved in RNA processing and mRNA degradation. The cofactor is Mg(2+).

Its subcellular location is the cytoplasm. The protein localises to the secreted. The protein resides in the cell surface. It carries out the reaction (2R)-2-phosphoglycerate = phosphoenolpyruvate + H2O. It functions in the pathway carbohydrate degradation; glycolysis; pyruvate from D-glyceraldehyde 3-phosphate: step 4/5. Its function is as follows. Catalyzes the reversible conversion of 2-phosphoglycerate (2-PG) into phosphoenolpyruvate (PEP). It is essential for the degradation of carbohydrates via glycolysis. The polypeptide is Enolase (Acinetobacter baumannii (strain SDF)).